The following is an 875-amino-acid chain: GATOR2 complex protein MIOS (875 aa).

WD repeat units follow at residues 58-100 (SDTP…NSKF), 111-155 (KHAR…TPDI), 182-221 (GQND…QKMF), 223-261 (NTKA…KPVL), 265-306 (EQPK…TPIG), and 395-437 (RLRA…KQYT). Residues 735–781 (VSCNFCGKSISYSCSAVPHQGRGFSQYGVSGSPTKSKVTSCPGCRKP) form a C4-type zinc finger. Residues cysteine 737 and cysteine 740 each coordinate Zn(2+). Phosphoserine occurs at positions 759 and 766. 11 residues coordinate Zn(2+): cysteine 775, cysteine 778, cysteine 788, cysteine 827, cysteine 830, histidine 832, histidine 835, histidine 838, cysteine 849, cysteine 854, and cysteine 858. Residues 782–863 (LPRCALCLIN…CTCKCMQLDT (82 aa)) form an RING-type; atypical zinc finger.

Belongs to the WD repeat mio family. As to quaternary structure, component of the GATOR2 subcomplex, composed of MIOS, SEC13, SEH1L, WDR24 and WDR59. The GATOR2 complex interacts with CASTOR1 and CASTOR2; the interaction is negatively regulated by arginine. CASTOR1 and CASTOR2 convey leucine availability via direct interaction with MIOS. The GATOR2 complex interacts with SESN1, SESN2 and SESN3; the interaction is negatively regulated by amino acids. Interacts with SAR1A and SAR1B; the interaction is direct, disrupted by leucine and mediates the interaction of SAR1A or SAR1B with the GATOR2 complex to negatively regulate the TORC1 signaling upon leucine deprivation.

The protein resides in the lysosome membrane. With respect to regulation, the GATOR2 complex is negatively regulated by the upstream amino acid sensors CASTOR1 and SESN2, which sequester the GATOR2 complex in absence of amino acids. In the presence of abundant amino acids, GATOR2 is released from CASTOR1 and SESN2 and activated. In terms of biological role, as a component of the GATOR2 complex, functions as an activator of the amino acid-sensing branch of the mTORC1 signaling pathway. The GATOR2 complex indirectly activates mTORC1 through the inhibition of the GATOR1 subcomplex. GATOR2 probably acts as an E3 ubiquitin-protein ligase toward GATOR1. In the presence of abundant amino acids, the GATOR2 complex mediates ubiquitination of the NPRL2 core component of the GATOR1 complex, leading to GATOR1 inactivation. In the absence of amino acids, GATOR2 is inhibited, activating the GATOR1 complex. Within the GATOR2 complex, MIOS is required to prevent autoubiquitination of WDR24, the catalytic subunit of the complex. The GATOR2 complex is required for brain myelination. In Homo sapiens (Human), this protein is GATOR2 complex protein MIOS.